A 174-amino-acid chain; its full sequence is Co-chaperone protein HscB homolog (174 aa).

A J domain is found at 2-74; that stretch reads NYFELFKFSP…IRRAEHMLSL (73 aa).

This sequence belongs to the HscB family. In terms of assembly, interacts with HscA and stimulates its ATPase activity.

Its function is as follows. Co-chaperone involved in the maturation of iron-sulfur cluster-containing proteins. Seems to help targeting proteins to be folded toward HscA. This is Co-chaperone protein HscB homolog from Shewanella sp. (strain ANA-3).